We begin with the raw amino-acid sequence, 221 residues long: 7-cyano-7-deazaguanine synthase (221 aa).

9 to 19 (YSGGMDSFTVL) serves as a coordination point for ATP. Zn(2+) is bound by residues cysteine 186, cysteine 194, cysteine 197, and cysteine 200.

The protein belongs to the QueC family. Requires Zn(2+) as cofactor.

It catalyses the reaction 7-carboxy-7-deazaguanine + NH4(+) + ATP = 7-cyano-7-deazaguanine + ADP + phosphate + H2O + H(+). The protein operates within purine metabolism; 7-cyano-7-deazaguanine biosynthesis. Catalyzes the ATP-dependent conversion of 7-carboxy-7-deazaguanine (CDG) to 7-cyano-7-deazaguanine (preQ(0)). The chain is 7-cyano-7-deazaguanine synthase from Psychromonas ingrahamii (strain DSM 17664 / CCUG 51855 / 37).